Consider the following 215-residue polypeptide: Guanylate kinase (215 aa).

The 179-residue stretch at 11-189 (GNVFMVVAPS…ALTELVQIIS (179 aa)) folds into the Guanylate kinase-like domain. 18-25 (APSGAGKS) serves as a coordination point for ATP.

This sequence belongs to the guanylate kinase family.

Its subcellular location is the cytoplasm. It catalyses the reaction GMP + ATP = GDP + ADP. Its function is as follows. Essential for recycling GMP and indirectly, cGMP. The chain is Guanylate kinase from Bordetella bronchiseptica (strain ATCC BAA-588 / NCTC 13252 / RB50) (Alcaligenes bronchisepticus).